Reading from the N-terminus, the 353-residue chain is MTAILERRESESLWGRFCNWITSTENRLYIGWFGVLMIPTLLTATSVFIIAFIAAPPVDIDGIREPVSGSLLYGNNIISGAIIPTSAAIGLHFYPIWEAASVDEWLYNGGPYELIVLHFLLGVACYMGREWELSFRLGMRPWIAVAYSAPVAAATAVFLIYPIGQGSFSDGMPLGISGTFNFMIVFQAEHNILMHPFHMLGVAGVFGGSLFSAMHGSLVTSSLIRETTENESANEGYRFGQEEETYNIVAAHGYFGRLIFQYASFNNSRSLHFFLAAWPVVGIWFTALGISTMAFNLNGFNFNQSVVDSQGRVINTWADIINRANLGMEVMHERNAHNFPLDLAAIDAPSING.

Threonine 2 carries the post-translational modification N-acetylthreonine. Position 2 is a phosphothreonine (threonine 2). Helical transmembrane passes span 29-46 (YIGW…TATS), 118-133 (HFLL…EWEL), and 142-156 (WIAV…AATA). Histidine 118 is a binding site for chlorophyll a. Tyrosine 126 is a binding site for pheophytin a. The [CaMn4O5] cluster site is built by aspartate 170 and glutamate 189. The chain crosses the membrane as a helical span at residues 197-218 (FHMLGVAGVFGGSLFSAMHGSL). Histidine 198 contributes to the chlorophyll a binding site. A quinone contacts are provided by residues histidine 215 and 264 to 265 (SF). Position 215 (histidine 215) interacts with Fe cation. Histidine 272 is a binding site for Fe cation. The chain crosses the membrane as a helical span at residues 274 to 288 (FLAAWPVVGIWFTAL). Residues histidine 332, glutamate 333, aspartate 342, and alanine 344 each contribute to the [CaMn4O5] cluster site. The propeptide occupies 345–353 (AIDAPSING).

This sequence belongs to the reaction center PufL/M/PsbA/D family. As to quaternary structure, PSII is composed of 1 copy each of membrane proteins PsbA, PsbB, PsbC, PsbD, PsbE, PsbF, PsbH, PsbI, PsbJ, PsbK, PsbL, PsbM, PsbT, PsbX, PsbY, PsbZ, Psb30/Ycf12, at least 3 peripheral proteins of the oxygen-evolving complex and a large number of cofactors. It forms dimeric complexes. The cofactor is The D1/D2 heterodimer binds P680, chlorophylls that are the primary electron donor of PSII, and subsequent electron acceptors. It shares a non-heme iron and each subunit binds pheophytin, quinone, additional chlorophylls, carotenoids and lipids. D1 provides most of the ligands for the Mn4-Ca-O5 cluster of the oxygen-evolving complex (OEC). There is also a Cl(-1) ion associated with D1 and D2, which is required for oxygen evolution. The PSII complex binds additional chlorophylls, carotenoids and specific lipids.. Tyr-161 forms a radical intermediate that is referred to as redox-active TyrZ, YZ or Y-Z. In terms of processing, C-terminally processed by CTPA; processing is essential to allow assembly of the oxygen-evolving complex and thus photosynthetic growth.

Its subcellular location is the plastid. The protein resides in the chloroplast thylakoid membrane. The catalysed reaction is 2 a plastoquinone + 4 hnu + 2 H2O = 2 a plastoquinol + O2. Photosystem II (PSII) is a light-driven water:plastoquinone oxidoreductase that uses light energy to abstract electrons from H(2)O, generating O(2) and a proton gradient subsequently used for ATP formation. It consists of a core antenna complex that captures photons, and an electron transfer chain that converts photonic excitation into a charge separation. The D1/D2 (PsbA/PsbD) reaction center heterodimer binds P680, the primary electron donor of PSII as well as several subsequent electron acceptors. The chain is Photosystem II protein D1 from Glycine max (Soybean).